We begin with the raw amino-acid sequence, 941 residues long: Putative helicase 121R (941 aa).

Residues 285–323 (LKQELKDIEGENSETIKRNLKDAKDLLKILNKKRANEYN) adopt a coiled-coil conformation. Residues 492 to 514 (DDSGRDSEEDSQEEEVSSSQEQL) form a disordered region. The segment covering 498–507 (SEEDSQEEEV) has biased composition (acidic residues). An SF3 helicase domain is found at 609-791 (EEVLELYNFL…FVAREKCPET (183 aa)). Position 653–660 (653–660 (GNGNNGKS)) interacts with ATP.

Belongs to the IIV-6 184L family.

This Invertebrate iridescent virus 3 (IIV-3) protein is Putative helicase 121R.